The following is an 86-amino-acid chain: Large ribosomal subunit protein bL27 (86 aa).

This sequence belongs to the bacterial ribosomal protein bL27 family.

The chain is Large ribosomal subunit protein bL27 from Christiangramia forsetii (strain DSM 17595 / CGMCC 1.15422 / KT0803) (Gramella forsetii).